Reading from the N-terminus, the 255-residue chain is NAD kinase (255 aa).

D44 acts as the Proton acceptor in catalysis. NAD(+) contacts are provided by residues 44-45, H49, 114-115, D144, A152, 155-160, and Q216; these read DG, NE, and SAYNLS.

The protein belongs to the NAD kinase family. A divalent metal cation serves as cofactor.

It localises to the cytoplasm. The catalysed reaction is NAD(+) + ATP = ADP + NADP(+) + H(+). In terms of biological role, involved in the regulation of the intracellular balance of NAD and NADP, and is a key enzyme in the biosynthesis of NADP. Catalyzes specifically the phosphorylation on 2'-hydroxyl of the adenosine moiety of NAD to yield NADP. This Rickettsia akari (strain Hartford) protein is NAD kinase.